A 242-amino-acid polypeptide reads, in one-letter code: Small ribosomal subunit protein uS2 (242 aa).

The protein belongs to the universal ribosomal protein uS2 family.

The polypeptide is Small ribosomal subunit protein uS2 (Vibrio campbellii (strain ATCC BAA-1116)).